The chain runs to 82 residues: DNA-directed RNA polymerase subunit Rpo5 (82 aa).

This sequence belongs to the archaeal Rpo5/eukaryotic RPB5 RNA polymerase subunit family. As to quaternary structure, part of the RNA polymerase complex.

It is found in the cytoplasm. It carries out the reaction RNA(n) + a ribonucleoside 5'-triphosphate = RNA(n+1) + diphosphate. In terms of biological role, DNA-dependent RNA polymerase (RNAP) catalyzes the transcription of DNA into RNA using the four ribonucleoside triphosphates as substrates. The chain is DNA-directed RNA polymerase subunit Rpo5 from Pyrococcus abyssi (strain GE5 / Orsay).